The primary structure comprises 245 residues: Ribosomal RNA small subunit methyltransferase J (245 aa).

S-adenosyl-L-methionine is bound by residues R94–D95, E110–R111, and D164.

It belongs to the methyltransferase superfamily. RsmJ family.

The protein localises to the cytoplasm. The enzyme catalyses guanosine(1516) in 16S rRNA + S-adenosyl-L-methionine = N(2)-methylguanosine(1516) in 16S rRNA + S-adenosyl-L-homocysteine + H(+). In terms of biological role, specifically methylates the guanosine in position 1516 of 16S rRNA. The protein is Ribosomal RNA small subunit methyltransferase J of Dechloromonas aromatica (strain RCB).